Here is a 372-residue protein sequence, read N- to C-terminus: Cyclin-J (372 aa).

The Cyclin N-terminal domain occupies 15-143; it reads DIHQALRYKE…LLETFQWNLC (129 aa).

This sequence belongs to the cyclin family.

The polypeptide is Cyclin-J (CCNJ) (Homo sapiens (Human)).